A 431-amino-acid polypeptide reads, in one-letter code: Divalent metal cation transporter MntH (431 aa).

12 helical membrane-spanning segments follow: residues 30 to 50 (WSWT…IDPG), 63 to 83 (GYTL…IQTL), 106 to 126 (PLVW…DLAE), 137 to 159 (LFGL…ALHL), 169 to 189 (ILIG…LVLS), 209 to 229 (YALY…VIYL), 257 to 277 (VILG…MAAA), 287 to 307 (VATI…VTAS), 309 to 329 (VFGL…TLSG), 341 to 361 (IPLW…IMLG), 367 to 387 (ALVA…VPLL), and 405 to 425 (VTGV…YVLF).

It belongs to the NRAMP family.

The protein resides in the cell inner membrane. In terms of biological role, h(+)-stimulated, divalent metal cation uptake system. The protein is Divalent metal cation transporter MntH of Chromohalobacter salexigens (strain ATCC BAA-138 / DSM 3043 / CIP 106854 / NCIMB 13768 / 1H11).